The primary structure comprises 371 residues: Putative F-box protein At1g58090 (371 aa).

One can recognise an F-box domain in the interval 1–46; it reads MVSKKLPLDLEEEILFRVPPRSLVRFRSVCREWNTLFKNKRFINKN.

In Arabidopsis thaliana (Mouse-ear cress), this protein is Putative F-box protein At1g58090.